Reading from the N-terminus, the 147-residue chain is D-aminoacyl-tRNA deacylase (147 aa).

Residues 136 to 137 carry the Gly-cisPro motif, important for rejection of L-amino acids motif; that stretch reads GP.

Belongs to the DTD family. In terms of assembly, homodimer.

It is found in the cytoplasm. The enzyme catalyses glycyl-tRNA(Ala) + H2O = tRNA(Ala) + glycine + H(+). The catalysed reaction is a D-aminoacyl-tRNA + H2O = a tRNA + a D-alpha-amino acid + H(+). Functionally, an aminoacyl-tRNA editing enzyme that deacylates mischarged D-aminoacyl-tRNAs. Also deacylates mischarged glycyl-tRNA(Ala), protecting cells against glycine mischarging by AlaRS. Acts via tRNA-based rather than protein-based catalysis; rejects L-amino acids rather than detecting D-amino acids in the active site. By recycling D-aminoacyl-tRNA to D-amino acids and free tRNA molecules, this enzyme counteracts the toxicity associated with the formation of D-aminoacyl-tRNA entities in vivo and helps enforce protein L-homochirality. This Streptococcus pyogenes serotype M1 protein is D-aminoacyl-tRNA deacylase.